A 177-amino-acid chain; its full sequence is Small ribosomal subunit protein uS5 (177 aa).

The S5 DRBM domain maps to 21–84 (LLDRVVKIKR…KQASRSMIHV (64 aa)).

It belongs to the universal ribosomal protein uS5 family. As to quaternary structure, part of the 30S ribosomal subunit. Contacts proteins S4 and S8.

In terms of biological role, with S4 and S12 plays an important role in translational accuracy. Located at the back of the 30S subunit body where it stabilizes the conformation of the head with respect to the body. This Rhodopirellula baltica (strain DSM 10527 / NCIMB 13988 / SH1) protein is Small ribosomal subunit protein uS5.